We begin with the raw amino-acid sequence, 446 residues long: G patch domain-containing protein 4 (446 aa).

At M1 the chain carries N-acetylmethionine. T4 carries the phosphothreonine modification. Residues 11–57 (GMKFAEEQLLKHGWTQGKGLGRKENGITQALRVTLKQDTHGVGHDPA) form the G-patch domain. K46 participates in a covalent cross-link: Glycyl lysine isopeptide (Lys-Gly) (interchain with G-Cter in SUMO2). Phosphothreonine is present on T116. Disordered regions lie at residues 116–140 (TSGG…SKSP) and 188–446 (QDPG…KKRD). Phosphoserine occurs at positions 128, 130, and 139. Residues 166-251 (TMKAKLARLE…KKKRRHQEGK (86 aa)) are a coiled coil. The segment covering 219-237 (ASERNDADEKHPEHAEQNI) has biased composition (basic and acidic residues). Residues 238–248 (RKSKKKKRRHQ) are compositionally biased toward basic residues. 4 stretches are compositionally biased toward basic and acidic residues: residues 249-268 (EGKV…KEDA), 297-328 (HHEE…ESRA), 363-375 (REAE…DGRS), and 392-409 (LDVR…ESRA). 2 stretches are compositionally biased toward basic residues: residues 416 to 427 (RGKRKRQQHPKK) and 437 to 446 (KAKKKQKKRD).

This Homo sapiens (Human) protein is G patch domain-containing protein 4 (GPATCH4).